We begin with the raw amino-acid sequence, 236 residues long: Probable transcriptional regulatory protein Suden_1389 (236 aa).

Belongs to the TACO1 family.

It localises to the cytoplasm. This is Probable transcriptional regulatory protein Suden_1389 from Sulfurimonas denitrificans (strain ATCC 33889 / DSM 1251) (Thiomicrospira denitrificans (strain ATCC 33889 / DSM 1251)).